The primary structure comprises 525 residues: Eukaryotic translation initiation factor 3 subunit L (525 aa).

Acidic residues predominate over residues 1-19 (MYTQADEYDGGDAGYEDDY). The interval 1 to 21 (MYTQADEYDGGDAGYEDDYSG) is disordered. One can recognise a PCI domain in the interval 296-502 (DAIRCFSSVL…IHIADTKVDR (207 aa)).

It belongs to the eIF-3 subunit L family. As to quaternary structure, component of the eukaryotic translation initiation factor 3 (eIF-3) complex.

The protein resides in the cytoplasm. Functionally, component of the eukaryotic translation initiation factor 3 (eIF-3) complex, which is involved in protein synthesis of a specialized repertoire of mRNAs and, together with other initiation factors, stimulates binding of mRNA and methionyl-tRNAi to the 40S ribosome. The eIF-3 complex specifically targets and initiates translation of a subset of mRNAs involved in cell proliferation. This Nematostella vectensis (Starlet sea anemone) protein is Eukaryotic translation initiation factor 3 subunit L.